The sequence spans 251 residues: 3-deoxy-manno-octulosonate cytidylyltransferase (251 aa).

Belongs to the KdsB family.

It localises to the cytoplasm. It catalyses the reaction 3-deoxy-alpha-D-manno-oct-2-ulosonate + CTP = CMP-3-deoxy-beta-D-manno-octulosonate + diphosphate. It participates in nucleotide-sugar biosynthesis; CMP-3-deoxy-D-manno-octulosonate biosynthesis; CMP-3-deoxy-D-manno-octulosonate from 3-deoxy-D-manno-octulosonate and CTP: step 1/1. Its pathway is bacterial outer membrane biogenesis; lipopolysaccharide biosynthesis. Activates KDO (a required 8-carbon sugar) for incorporation into bacterial lipopolysaccharide in Gram-negative bacteria. The protein is 3-deoxy-manno-octulosonate cytidylyltransferase of Rhizobium etli (strain ATCC 51251 / DSM 11541 / JCM 21823 / NBRC 15573 / CFN 42).